A 495-amino-acid polypeptide reads, in one-letter code: uncharacterized protein (495 aa).

6 residues coordinate FAD: Ser-16, Glu-36, Trp-45, Asp-56, Tyr-62, and Val-105.

The protein belongs to the FAD-binding monooxygenase family. It depends on FAD as a cofactor.

This is an uncharacterized protein from Mycobacterium tuberculosis (strain CDC 1551 / Oshkosh).